The chain runs to 411 residues: POU domain, class 4, transcription factor 2 (411 aa).

Residues 29–95 (LHSASPGSSA…SEAMRRACLP (67 aa)) form a disordered region. Positions 31 to 52 (SASPGSSAPAAPSASSPSSSSN) are enriched in low complexity. Gly residues-rich tracts occupy residues 53-68 (AGGG…GGGR) and 76-86 (GSGGSGGGGGS). The tract at residues 93–239 (CLPTPPSNIF…MHQAALSMAH (147 aa)) is required for transcriptional activation. A POU-IV box motif is present at residues 112-121 (RAEALAAVDI). A compositionally biased stretch (low complexity) spans 154–168 (SAASSSSVPISHPSA). The disordered stretch occupies residues 154 to 190 (SAASSSSVPISHPSALAGTHHHHHHHHHHHHQPHQAL). A compositionally biased stretch (basic residues) spans 172 to 186 (THHHHHHHHHHHHQP). A Nuclear speckle targeting signal motif is present at residues 173 to 187 (HHHHHHHHHHHHQPH). The tract at residues 240–411 (AHGLPSHMGC…QKRMKYSAGI (172 aa)) is required for DNA-binding and transcriptional repression. The POU-specific domain maps to 252-329 (DVDADPRDLE…ILQAWLEEAE (78 aa)). A DNA-binding region (homeobox) is located at residues 347–406 (KKRKRTSIAAPEKRSLEAYFAIQPRPSSEKIAAIAEKLDLKKNVVRVWFCNQRQKQKRMK).

Belongs to the POU transcription factor family. Class-4 subfamily. As to quaternary structure, isoform 2: Interacts with POU4F1 isoform 1; this interaction inhibits both POU4F1 DNA-binding and transcriptional activities. Isoform 2: Interacts (C-terminus) with ESR1 (via DNA-binding domain); this interaction increases the estrogen receptor ESR1 transcriptional activity in a DNA- and ligand 17-beta-estradiol-independent manner. Isoform 2: Interacts (via C-terminus) with TP53 (via N-terminus). Interacts with DLX1 (via homeobox DNA-binding domain); this interaction suppresses DLX1-mediated transcriptional activity in postnatal retina enhancing retinal ganglion cell (RGC) differentiation. Interacts with DLX2 (via homeobox DNA-binding domain); this interaction enhances RGC differentiation. Isoform 1: Interacts (via C-terminus) with ISL1 (via C-terminus). Isoform 1: Interacts with ISL2. Isoform 1: Interacts with LHX2. In terms of tissue distribution, expressed in retinal ganglion cells (RGCs). Expressed in mature osteoclasts. Expressed in cells of layers of the superior colliculus and the adjacent periaqueductal gray (at protein level). Expressed in the brain, peripheral sensory nervous system and retina. Expressed in the optical, intermediate, and deep gray areas of the superior colliculus, the dorsal column of the mesencephalic and pontine central gray, and the lateral interpeduncular nucleus of the brain. Expressed predominantly in postmitotic, terminally differentiated neurons. Expressed in ganglion cell layer (GCL) of the retina.

The protein localises to the nucleus. The protein resides in the nucleus speckle. It localises to the cytoplasm. Functionally, tissue-specific DNA-binding transcription factor involved in the development and differentiation of target cells. Functions either as activator or repressor by modulating the rate of target gene transcription through RNA polymerase II enzyme in a promoter-dependent manner. Binds to the consensus octamer motif 5'-AT[A/T]A[T/A]T[A/T]A-3' of promoter of target genes. Plays a fundamental role in the gene regulatory network essential for retinal ganglion cell (RGC) differentiation. Binds to an octamer site to form a ternary complex with ISL1; cooperates positively with ISL1 and ISL2 to potentiate transcriptional activation of RGC target genes being involved in RGC fate commitment in the developing retina and RGC axon formation and pathfinding. Inhibits DLX1 and DLX2 transcriptional activities preventing DLX1- and DLX2-mediated ability to promote amacrine cell fate specification. In cooperation with TP53 potentiates transcriptional activation of BAX promoter activity increasing neuronal cell apoptosis. Negatively regulates BAX promoter activity in the absence of TP53. Acts as a transcriptional coactivator via its interaction with the transcription factor ESR1 by enhancing its effect on estrogen response element (ERE)-containing promoter. Antagonizes the transcriptional stimulatory activity of POU4F1 by preventing its binding to an octamer motif. Involved in TNFSF11-mediated terminal osteoclast differentiation. This Mus musculus (Mouse) protein is POU domain, class 4, transcription factor 2.